We begin with the raw amino-acid sequence, 1167 residues long: Pesticidal crystal protein Cry1Ja (1167 aa).

This sequence belongs to the delta endotoxin family.

Functionally, promotes colloidosmotic lysis by binding to the midgut epithelial cells of many lepidopteran larvae. The chain is Pesticidal crystal protein Cry1Ja (cry1Ja) from Bacillus thuringiensis.